The following is a 207-amino-acid chain: Large ribosomal subunit protein uL4 (207 aa).

The interval 45–78 is disordered; that stretch reads RQGTHAVKNRSAVRGGGRKPWRQKGTGRARQGSI. Positions 60 to 71 are enriched in basic residues; sequence GGRKPWRQKGTG.

The protein belongs to the universal ribosomal protein uL4 family. As to quaternary structure, part of the 50S ribosomal subunit.

Its function is as follows. One of the primary rRNA binding proteins, this protein initially binds near the 5'-end of the 23S rRNA. It is important during the early stages of 50S assembly. It makes multiple contacts with different domains of the 23S rRNA in the assembled 50S subunit and ribosome. Functionally, forms part of the polypeptide exit tunnel. The sequence is that of Large ribosomal subunit protein uL4 from Pediococcus pentosaceus (strain ATCC 25745 / CCUG 21536 / LMG 10740 / 183-1w).